The primary structure comprises 96 residues: Protein YddL (96 aa).

A signal peptide spans 1-21 (MKLKIVAVVVTGLLAANVAHA).

This chain is Protein YddL (yddL), found in Escherichia coli (strain K12).